A 273-amino-acid polypeptide reads, in one-letter code: Protein BMH2 (273 aa).

Residue serine 2 is modified to N-acetylserine. Positions 236-273 (DISESGQEDQQQQQQQQQQQQQQQQQAPAEQTQGEPTK) are disordered. Low complexity predominate over residues 245 to 261 (QQQQQQQQQQQQQQQQQ). Residues 262-273 (APAEQTQGEPTK) show a composition bias toward polar residues.

It belongs to the 14-3-3 family. In terms of assembly, interacts with NTH1 (via N-terminus when phosphorylated by PKA); the interaction is direct and activates NTH1. Interacts with FIN1.

Its subcellular location is the cytoplasm. The protein resides in the nucleus. The sequence is that of Protein BMH2 (BMH2) from Saccharomyces cerevisiae (strain ATCC 204508 / S288c) (Baker's yeast).